The sequence spans 206 residues: Probable metallo-hydrolase MJ0888 (206 aa).

Residues His-55, His-57, Asp-59, His-60, His-130, Asp-147, and His-190 each contribute to the Zn(2+) site.

Belongs to the metallo-beta-lactamase superfamily. The cofactor is Zn(2+).

In Methanocaldococcus jannaschii (strain ATCC 43067 / DSM 2661 / JAL-1 / JCM 10045 / NBRC 100440) (Methanococcus jannaschii), this protein is Probable metallo-hydrolase MJ0888.